A 185-amino-acid chain; its full sequence is Inner membrane lipoprotein DcrB (185 aa).

Residues 1–19 (MRNLVKYVGIGLLVMGLAA) form the signal peptide. Cys20 is lipidated: N-palmitoyl cysteine. Cys20 is lipidated: S-diacylglycerol cysteine.

The protein belongs to the DcrB family.

It is found in the cell membrane. Functionally, plays a role in cell envelope biogenesis, maintenance of cell envelope integrity and membrane homeostasis. Essential for lipoprotein maturation under conditions where membrane fluidity may be altered. The sequence is that of Inner membrane lipoprotein DcrB from Shigella flexneri.